The primary structure comprises 195 residues: MSTTIDVPESNNVAKEKVLLLGARPRPGGWKKGVAIMDFILRLGAIAAAPGAAATMGTSDQTLPFFTQFFQFEASYDSFTTFQFFVITMALVAGYLVLSLPFSIVVIIRPHAVGPRLFLIILDTVFLTLATASGASAAAIVYLAHNGNQDSNWLAICNQFGDFCAQTSGAVVSSLVSVVIFVLLIVMSALALRRN.

The Cytoplasmic portion of the chain corresponds to 1–33 (MSTTIDVPESNNVAKEKVLLLGARPRPGGWKKG). Residues 34–54 (VAIMDFILRLGAIAAAPGAAA) traverse the membrane as a helical segment. Over 55–86 (TMGTSDQTLPFFTQFFQFEASYDSFTTFQFFV) the chain is Extracellular. A helical membrane pass occupies residues 87-107 (ITMALVAGYLVLSLPFSIVVI). Topologically, residues 108 to 116 (IRPHAVGPR) are cytoplasmic. A helical transmembrane segment spans residues 117–137 (LFLIILDTVFLTLATASGASA). Residues 138-169 (AAIVYLAHNGNQDSNWLAICNQFGDFCAQTSG) lie on the Extracellular side of the membrane. The chain crosses the membrane as a helical span at residues 170-190 (AVVSSLVSVVIFVLLIVMSAL). The Cytoplasmic segment spans residues 191–195 (ALRRN).

It belongs to the Casparian strip membrane proteins (CASP) family. Homodimer and heterodimers.

It is found in the cell membrane. In terms of biological role, regulates membrane-cell wall junctions and localized cell wall deposition. Required for establishment of the Casparian strip membrane domain (CSD) and the subsequent formation of Casparian strips, a cell wall modification of the root endodermis that determines an apoplastic barrier between the intraorganismal apoplasm and the extraorganismal apoplasm and prevents lateral diffusion. The protein is Casparian strip membrane protein 3 of Glycine max (Soybean).